Reading from the N-terminus, the 180-residue chain is Fanconi anemia core complex-associated protein 20 (180 aa).

Over residues 1–17 (MEAARRPRLGLSRRRPR) the composition is skewed to basic residues. Disordered regions lie at residues 1-28 (MEAA…GRPW) and 106-135 (GAGG…VEQQ). 2 positions are modified to phosphoserine: Ser-113 and Ser-137. A UBZ2-type zinc finger spans residues 144 to 180 (LRSCPMCQKEFAPRLTQLDVDSHLAQCLAESTEDVTW). 4 residues coordinate Zn(2+): Cys-147, Cys-150, His-166, and Cys-170.

Component of the Fanconi anemia (FA) complex. Interacts with FANCA; interaction is direct. Interacts with REV1. Reported to bind monoubiquitinated REV1; however it binds better to non-ubiquitinated REV1.

It localises to the nucleus. The protein localises to the chromosome. In terms of biological role, component of the Fanconi anemia (FA) complex required to recruit the FA complex to DNA interstrand cross-links (ICLs) and promote ICLs repair. Following DNA damage recognizes and binds 'Lys-63'-linked ubiquitin generated by RNF8 at ICLs and recruits other components of the FA complex. Promotes translesion synthesis via interaction with REV1. This Homo sapiens (Human) protein is Fanconi anemia core complex-associated protein 20.